The primary structure comprises 389 residues: Putative nickel insertion protein (389 aa).

The protein belongs to the LarC family.

In Desulfotalea psychrophila (strain LSv54 / DSM 12343), this protein is Putative nickel insertion protein.